Reading from the N-terminus, the 614-residue chain is Acetylcholinesterase (614 aa).

The first 31 residues, 1-31 (MRPPWYPLHTPSLAFPLLFLLLSLLGGGARA), serve as a signal peptide directing secretion. Cysteine 100 and cysteine 127 form a disulfide bridge. Serine 234 functions as the Acyl-ester intermediate in the catalytic mechanism. Cysteine 288 and cysteine 303 are oxidised to a cystine. An N-linked (GlcNAc...) asparagine glycan is attached at asparagine 296. The Charge relay system role is filled by glutamate 365. N-linked (GlcNAc...) asparagine glycosylation occurs at asparagine 381. A disulfide bridge links cysteine 440 with cysteine 560. Catalysis depends on histidine 478, which acts as the Charge relay system. Asparagine 495 carries N-linked (GlcNAc...) asparagine glycosylation.

It belongs to the type-B carboxylesterase/lipase family. In terms of assembly, isoform H generates GPI-anchored dimers; disulfide linked. Isoform T generates multiple structures, ranging from monomers and dimers to collagen-tailed and hydrophobic-tailed forms, in which catalytic tetramers are associated with anchoring proteins that attach them to the basal lamina or to cell membranes. In the collagen-tailed forms, isoform T subunits are associated with a specific collagen, COLQ, which triggers the formation of isoform T tetramers, from monomers and dimers. Interacts with PRIMA1. The interaction with PRIMA1 is required to anchor it to the basal lamina of cells and organize into tetramers. In terms of tissue distribution, predominates in most expressing tissues except erythrocytes where a glycophospholipid-attached form of ACHE predominates.

The protein localises to the synapse. It localises to the secreted. The protein resides in the cell membrane. It carries out the reaction acetylcholine + H2O = choline + acetate + H(+). In terms of biological role, terminates signal transduction at the neuromuscular junction by rapid hydrolysis of the acetylcholine released into the synaptic cleft. The polypeptide is Acetylcholinesterase (Ache) (Mus musculus (Mouse)).